A 687-amino-acid chain; its full sequence is MAEELVLERCDLELETNGRDHHTADLCREKLVVRRGQPFWLTLHFEGRNYEASVDSLTFSVVTGPAPSQEAGTKARFPLRDAVEEGDWTATVVDQQDCTLSLQLTTPANAPIGLYRLSLEASTGYQGSSFVLGHFILLFNAWCPADAVYLDSEEERQEYVLTQQGFIYQGSAKFIKNIPWNFGQFEDGILDICLILLDVNPKFLKNAGRDCSRRSSPVYVGRVVSGMVNCNDDQGVLLGRWDNNYGDGVSPMSWIGSVDILRRWKNHGCQRVKYGQCWVFAAVACTVLRCLGIPTRVVTNYNSAHDQNSNLLIEYFRNEFGEIQGDKSEMIWNFHCWVESWMTRPDLQPGYEGWQALDPTPQEKSEGTYCCGPVPVRAIKEGDLSTKYDAPFVFAEVNADVVDWIQQDDGSVHKSINRSLIVGLKISTKSVGRDEREDITHTYKYPEGSSEEREAFTRANHLNKLAEKEETGMAMRIRVGQSMNMGSDFDVFAHITNNTAEEYVCRLLLCARTVSYNGILGPECGTKYLLNLNLEPFSEKSVPLCILYEKYRDCLTESNLIKVRALLVEPVINSYLLAERDLYLENPEIKIRILGEPKQKRKLVAEVSLQNPLPVALEGCTFTVEGAGLTEEQKTVEIPDPVEAGEEVKVRMDLLPLHMGLHKLVVNFESDKLKAVKGFRNVIIGPA.

Ala2 is subject to N-acetylalanine. A Phosphoserine modification is found at Ser60. 2 disulfide bridges follow: Cys230-Cys370 and Cys370-Cys371. Residues Cys277, His335, and Asp358 contribute to the active site. Ca(2+) is bound by residues Asn398, Asp400, Glu437, Glu447, and Glu452. At Lys468 the chain carries N6-acetyllysine. Position 476-483 (476-483) interacts with GTP; the sequence is RIRVGQSM. A Ca(2+)-binding site is contributed by Glu539. 580-583 provides a ligand contact to GTP; sequence RDLY. Residue Gln633 forms an Isoglutamyl lysine isopeptide (Gln-Lys) (interchain with K-?) linkage.

The protein belongs to the transglutaminase superfamily. Transglutaminase family. Monomer. Interacts with phospholipase C; promoting alpha-1 adrenergic receptor signaling. Interacts with PLCD1. In terms of assembly, homooligomer. It depends on Ca(2+) as a cofactor. Post-translationally, disulfide bond formation inactivates the calcium-dependent acyltransferase activity. Cys-370 can form disulfide bonds with both Cys-230 and Cys-371: formation of a disulfide bond between Cys-230 and Cys-370 facilitates formation of the disulfide between Cys-370 and Cys-371, which promotes inactivation of the acyltransferase activity. May also form interchain disulfids between Cys-230 and Cys-370. Ca(2+) protects against disulfide bond formation and inactivation. Auto-transglutaminated: Forms covalent cross-links mediated by transglutaminase between Gln-633 and the epsilon-amino group of a lysine residue of itself or HMGB1, forming homopolymers and heteropolymers, respectively. In terms of processing, S-nitrosylated, leading to inactivation of the acyltransferase activity.

Its subcellular location is the cytoplasm. The protein localises to the cytosol. It localises to the nucleus. It is found in the chromosome. The protein resides in the secreted. Its subcellular location is the extracellular space. The protein localises to the extracellular matrix. It localises to the cell membrane. It is found in the mitochondrion. The protein resides in the perinuclear region. The enzyme catalyses L-glutaminyl-[protein] + L-lysyl-[protein] = [protein]-L-lysyl-N(6)-5-L-glutamyl-[protein] + NH4(+). It catalyses the reaction L-glutaminyl-[protein] + serotonin = 5-serotonyl-L-glutamyl-[protein] + NH4(+). It carries out the reaction L-glutaminyl-[protein] + dopamine = 5-dopaminyl-L-glutamyl-[protein] + NH4(+). The catalysed reaction is L-glutaminyl-[protein] + histamine = 5-histaminyl-L-glutamyl-[protein] + NH4(+). The enzyme catalyses L-glutaminyl-[protein] + (R)-noradrenaline = 5-(R)-noradrenalinyl-L-glutamyl-[protein] + NH4(+). It catalyses the reaction L-glutaminyl-[protein] + H2O = L-glutamyl-[protein] + NH4(+). Its activity is regulated as follows. Acyltransferase activity is regulated by the binding of GTP and Ca(2+): inactivated by GTP, which stabilizes its closed structure, thereby obstructing the accessibility of substrates to the active sites. In contrast, Ca(2+) acts as a cofactor by inducing conformational change to the active open form. In absence of Ca(2+), Mg(2+) may bind Ca(2+)-binding sites, promoting GTP-binding and subsequent inhibition of the acyltransferase activity. Extracellularly reduced and activated by CLIC3. Specifically inhibited by compound VA4 ((S)-Benzyl (6-Acrylamido-1-(4-((5-(dimethylamino)naphthalen-1-yl)sulfonyl)piperazin-1-yl)-1-oxohexan-2-yl)carbamate), which specifically abolishes both the transamidation and GTP-binding activities. Functionally, calcium-dependent acyltransferase that catalyzes the formation of covalent bonds between peptide-bound glutamine and various primary amines, such as gamma-amino group of peptide-bound lysine, or mono- and polyamines, thereby producing cross-linked or aminated proteins, respectively. Involved in many biological processes, such as bone development, angiogenesis, wound healing, cellular differentiation, chromatin modification and apoptosis. Acts as a protein-glutamine gamma-glutamyltransferase by mediating the cross-linking of proteins, such as ACO2, HSPB6, FN1, HMGB1, RAP1GDS1, SLC25A4/ANT1, SPP1 and WDR54. Under physiological conditions, the protein cross-linking activity is inhibited by GTP; inhibition is relieved by Ca(2+) in response to various stresses. When secreted, catalyzes cross-linking of proteins of the extracellular matrix, such as FN1 and SPP1 resulting in the formation of scaffolds. Plays a key role during apoptosis, both by (1) promoting the cross-linking of cytoskeletal proteins resulting in condensation of the cytoplasm, and by (2) mediating cross-linking proteins of the extracellular matrix, resulting in the irreversible formation of scaffolds that stabilize the integrity of the dying cells before their clearance by phagocytosis, thereby preventing the leakage of harmful intracellular components. In addition to protein cross-linking, can use different monoamine substrates to catalyze a vast array of protein post-translational modifications: mediates aminylation of serotonin, dopamine, noradrenaline or histamine into glutamine residues of target proteins to generate protein serotonylation, dopaminylation, noradrenalinylation or histaminylation, respectively. Mediates protein serotonylation of small GTPases during activation and aggregation of platelets, leading to constitutive activation of these GTPases. Plays a key role in chromatin organization by mediating serotonylation and dopaminylation of histone H3. Catalyzes serotonylation of 'Gln-5' of histone H3 (H3Q5ser) during serotonergic neuron differentiation, thereby facilitating transcription. Acts as a mediator of neurotransmission-independent role of nuclear dopamine in ventral tegmental area (VTA) neurons: catalyzes dopaminylation of 'Gln-5' of histone H3 (H3Q5dop), thereby regulating relapse-related transcriptional plasticity in the reward system. Regulates vein remodeling by mediating serotonylation and subsequent inactivation of ATP2A2/SERCA2. Also acts as a protein deamidase by mediating the side chain deamidation of specific glutamine residues of proteins to glutamate. Catalyzes specific deamidation of protein gliadin, a component of wheat gluten in the diet. May also act as an isopeptidase cleaving the previously formed cross-links. Also able to participate in signaling pathways independently of its acyltransferase activity: acts as a signal transducer in alpha-1 adrenergic receptor-mediated stimulation of phospholipase C-delta (PLCD) activity and is required for coupling alpha-1 adrenergic agonists to the stimulation of phosphoinositide lipid metabolism. Its function is as follows. Has cytotoxic activity: is able to induce apoptosis independently of its acyltransferase activity. The protein is Protein-glutamine gamma-glutamyltransferase 2 of Homo sapiens (Human).